A 386-amino-acid polypeptide reads, in one-letter code: Signal transduction histidine-protein kinase/phosphatase DegS (386 aa).

Residues 188 to 384 (KLSREIHDGP…TIIISIPITT (197 aa)) form the Histidine kinase domain. Phosphohistidine; by autocatalysis is present on His-194.

Autophosphorylated.

It localises to the cytoplasm. It catalyses the reaction ATP + protein L-histidine = ADP + protein N-phospho-L-histidine.. Its function is as follows. Member of the two-component regulatory system DegS/DegU, which plays an important role in the transition growth phase. Acts as both a protein kinase that undergoes autophosphorylation and subsequently transfers the phosphate to DegU, and a protein phosphatase that dephosphorylates phospho-DegU. The chain is Signal transduction histidine-protein kinase/phosphatase DegS (degS) from Brevibacillus brevis (Bacillus brevis).